A 388-amino-acid chain; its full sequence is MKILLFICGEGLGHTSRCLALGKEFLAAGHEVSFGAYGYSRELVRKTGYSAWEIQPEIRLIGETGIFDIGKSIKETLRNLSPVGFRKLLKLIEVLEPDVVLSDGYYSGILAARSRKVPVYFIGHQFNMEEFFQKKGPLLAVAGKLVRRFYNYIFSSVDGIMVPDYPLPYSVNRRNFTIPRALNPNIFFSGPLIRSRYREVEAKAFRHPNVLSTIGAFGYRAAIFRKVLEAAKLDPDIHYTFIAGPGIVPEQFPEIPENVEFTGFTDNPFPYYRGSDLVITAGGHGTIMESLAFGLPVLSFPDEKHTEQENNATVLEDAGYGKRMSYLTRPEVILACIREVLEDENYRRKTRRLMELAEVLDGPAAVRKLLEEKFGERSAGKENSKEET.

Belongs to the glycosyltransferase 28 family.

This is an uncharacterized protein from Methanosarcina acetivorans (strain ATCC 35395 / DSM 2834 / JCM 12185 / C2A).